The chain runs to 438 residues: Probable imidazolonepropionase (438 aa).

Residues Y159 and H192 each coordinate 4-imidazolone-5-propanoate. Y159 is a binding site for N-formimidoyl-L-glutamate. H260 contributes to the Fe(3+) binding site. H260 contacts Zn(2+). Position 263 (E263) interacts with 4-imidazolone-5-propanoate. Residue D334 coordinates Fe(3+). Position 334 (D334) interacts with Zn(2+). N336 provides a ligand contact to N-formimidoyl-L-glutamate.

Belongs to the metallo-dependent hydrolases superfamily. HutI family. Zn(2+) is required as a cofactor. Fe(3+) serves as cofactor.

It catalyses the reaction 4-imidazolone-5-propanoate + H2O = N-formimidoyl-L-glutamate. Its pathway is amino-acid degradation; L-histidine degradation into L-glutamate; N-formimidoyl-L-glutamate from L-histidine: step 3/3. The chain is Probable imidazolonepropionase (amdhd1) from Xenopus laevis (African clawed frog).